Consider the following 333-residue polypeptide: Chitinase-like protein 2 (333 aa).

Positions 1–27 (MVSKPLFSLLLLTVALVVFQTGTLVNA) are cleaved as a signal peptide. The cysteines at positions 50 and 56 are disulfide-linked. The N-linked (GlcNAc...) asparagine glycan is linked to Asn65. A disulfide bridge connects residues Cys165 and Cys175. 2 N-linked (GlcNAc...) asparagine glycosylation sites follow: Asn216 and Asn252. A disulfide bridge connects residues Cys275 and Cys313. The interval 307 to 333 (PHEKLSCADQEPFSSSSSAPPSSGSSS) is disordered. The segment covering 320–333 (SSSSSAPPSSGSSS) has biased composition (low complexity).

It belongs to the glycosyl hydrolase 19 family. Mostly expressed in stems, especially in xylem and interfascicular fibers.

It is found in the secreted. No chitinase activity. Required for proper cell wall biosynthesis in etiolated seedlings. Prevents lignin accumulation in hypocotyls. This Arabidopsis thaliana (Mouse-ear cress) protein is Chitinase-like protein 2 (CTL2).